A 471-amino-acid chain; its full sequence is 7-hydroxymethyl chlorophyll a reductase, chloroplastic (471 aa).

Residues 1-44 (MARCISFLSTSSSLPCATKPPCCSVSSVLPSSPSSHQCRGRKTS) constitute a chloroplast transit peptide.

This sequence belongs to the FrhB family. The cofactor is FAD. It depends on iron-sulfur cluster as a cofactor.

The protein localises to the plastid. It is found in the chloroplast. The enzyme catalyses chlorophyll a + 2 oxidized [2Fe-2S]-[ferredoxin] + H2O = 7(1)-hydroxychlorophyll a + 2 reduced [2Fe-2S]-[ferredoxin] + 2 H(+). Its function is as follows. Probable iron-sulfur flavoprotein that converts 7-hydroxymethyl chlorophyll a to chlorophyll a using ferredoxin as a reducing equivalent. Catalyzes the reduction of a hydroxymethyl group to a methyl group. This is 7-hydroxymethyl chlorophyll a reductase, chloroplastic (HCAR) from Oryza sativa subsp. japonica (Rice).